Consider the following 435-residue polypeptide: Methylenetetrahydrofolate--tRNA-(uracil-5-)-methyltransferase TrmFO (435 aa).

7–12 (GAGLAG) is an FAD binding site.

Belongs to the MnmG family. TrmFO subfamily. It depends on FAD as a cofactor.

It localises to the cytoplasm. The enzyme catalyses uridine(54) in tRNA + (6R)-5,10-methylene-5,6,7,8-tetrahydrofolate + NADH + H(+) = 5-methyluridine(54) in tRNA + (6S)-5,6,7,8-tetrahydrofolate + NAD(+). It catalyses the reaction uridine(54) in tRNA + (6R)-5,10-methylene-5,6,7,8-tetrahydrofolate + NADPH + H(+) = 5-methyluridine(54) in tRNA + (6S)-5,6,7,8-tetrahydrofolate + NADP(+). Functionally, catalyzes the folate-dependent formation of 5-methyl-uridine at position 54 (M-5-U54) in all tRNAs. This Thermotoga neapolitana (strain ATCC 49049 / DSM 4359 / NBRC 107923 / NS-E) protein is Methylenetetrahydrofolate--tRNA-(uracil-5-)-methyltransferase TrmFO.